Reading from the N-terminus, the 409-residue chain is Sperm equatorial segment protein 1 (409 aa).

Positions 1–18 (MKPVVLVALLWLWPSSFL) are cleaved as a signal peptide. Residue Asn132 is glycosylated (N-linked (GlcNAc...) asparagine). Positions 141 to 223 (EPYIEKEPEP…TTNTQGTPNT (83 aa)) are disordered. A compositionally biased stretch (acidic residues) spans 167 to 177 (PEPEPESESAP). The segment covering 198 to 208 (NKVRTGTSRMS) has biased composition (polar residues). Positions 209 to 223 (TVITQTTNTQGTPNT) are enriched in low complexity.

It belongs to the SPESP1 family. In terms of processing, glycosylated. In testis there are two predominant forms of 77- and 67-kDa and a form of 47-kDa, whereas in epididymal sperm from caput, corpus, and cauda there are two forms of 47- and 43-kDa. Testis forms contain complex carbohydrate residues. Epididymal sperm forms are N-glycosylated. Then undergoes significant glycosylation in the testis and that the majority of these glycoconjugates are removed by the time sperm reach the caput epididymis.

The protein resides in the cytoplasmic vesicle. It is found in the secretory vesicle. The protein localises to the acrosome. Involved in fertilization ability of sperm. This chain is Sperm equatorial segment protein 1, found in Rattus norvegicus (Rat).